We begin with the raw amino-acid sequence, 696 residues long: Elongation factor G (696 aa).

Positions 8–288 (EDYRNFGIMA…AVVEYLPSPA (281 aa)) constitute a tr-type G domain. GTP-binding positions include 17–24 (AHIDAGKT), 86–90 (DTPGH), and 140–143 (NKMD).

The protein belongs to the TRAFAC class translation factor GTPase superfamily. Classic translation factor GTPase family. EF-G/EF-2 subfamily.

Its subcellular location is the cytoplasm. Functionally, catalyzes the GTP-dependent ribosomal translocation step during translation elongation. During this step, the ribosome changes from the pre-translocational (PRE) to the post-translocational (POST) state as the newly formed A-site-bound peptidyl-tRNA and P-site-bound deacylated tRNA move to the P and E sites, respectively. Catalyzes the coordinated movement of the two tRNA molecules, the mRNA and conformational changes in the ribosome. In Mesorhizobium japonicum (strain LMG 29417 / CECT 9101 / MAFF 303099) (Mesorhizobium loti (strain MAFF 303099)), this protein is Elongation factor G.